The primary structure comprises 249 residues: Urease accessory protein UreG (249 aa).

The span at 1–13 shows a compositional bias: basic and acidic residues; sequence MHLGHEEFQRTDG. The tract at residues 1 to 34 is disordered; sequence MHLGHEEFQRTDGRASTGPADAGPAGAGRAPRIG. Over residues 18–33 the composition is skewed to low complexity; sequence GPADAGPAGAGRAPRI. 37–44 contributes to the GTP binding site; sequence GPVGSGKT. Residues 229–249 form a disordered region; it reads PRGGSYDASDASNASQPLNRM. Residues 238–249 show a composition bias toward polar residues; it reads DASNASQPLNRM.

This sequence belongs to the SIMIBI class G3E GTPase family. UreG subfamily. Homodimer. UreD, UreF and UreG form a complex that acts as a GTP-hydrolysis-dependent molecular chaperone, activating the urease apoprotein by helping to assemble the nickel containing metallocenter of UreC. The UreE protein probably delivers the nickel.

It is found in the cytoplasm. In terms of biological role, facilitates the functional incorporation of the urease nickel metallocenter. This process requires GTP hydrolysis, probably effectuated by UreG. This Frankia casuarinae (strain DSM 45818 / CECT 9043 / HFP020203 / CcI3) protein is Urease accessory protein UreG.